A 406-amino-acid polypeptide reads, in one-letter code: L-cysteine:1D-myo-inositol 2-amino-2-deoxy-alpha-D-glucopyranoside ligase (406 aa).

Position 45 (Cys-45) interacts with Zn(2+). Residues 45–48 (CGIT), Thr-60, and 83–85 (NIT) each bind L-cysteinyl-5'-AMP. A 'HIGH' region motif is present at residues 47–57 (ITPYDATHMGH). A 'ERGGDP' region motif is present at residues 185-190 (ERGGDP). Trp-225 contacts L-cysteinyl-5'-AMP. Cys-229 contacts Zn(2+). L-cysteinyl-5'-AMP is bound at residue 247-249 (GSD). His-254 is a Zn(2+) binding site. Residue Val-281 coordinates L-cysteinyl-5'-AMP. The 'KMSKS' region motif lies at 287–291 (KMSKS).

The protein belongs to the class-I aminoacyl-tRNA synthetase family. MshC subfamily. As to quaternary structure, monomer. Zn(2+) serves as cofactor.

The catalysed reaction is 1D-myo-inositol 2-amino-2-deoxy-alpha-D-glucopyranoside + L-cysteine + ATP = 1D-myo-inositol 2-(L-cysteinylamino)-2-deoxy-alpha-D-glucopyranoside + AMP + diphosphate + H(+). In terms of biological role, catalyzes the ATP-dependent condensation of GlcN-Ins and L-cysteine to form L-Cys-GlcN-Ins. The sequence is that of L-cysteine:1D-myo-inositol 2-amino-2-deoxy-alpha-D-glucopyranoside ligase from Kribbella flavida (strain DSM 17836 / JCM 10339 / NBRC 14399).